The sequence spans 634 residues: Threonine--tRNA ligase (634 aa).

Residues methionine 1–threonine 61 enclose the TGS domain. The tract at residues aspartate 241–proline 532 is catalytic. Cysteine 332, histidine 383, and histidine 509 together coordinate Zn(2+).

This sequence belongs to the class-II aminoacyl-tRNA synthetase family. Homodimer. It depends on Zn(2+) as a cofactor.

The protein resides in the cytoplasm. The catalysed reaction is tRNA(Thr) + L-threonine + ATP = L-threonyl-tRNA(Thr) + AMP + diphosphate + H(+). Functionally, catalyzes the attachment of threonine to tRNA(Thr) in a two-step reaction: L-threonine is first activated by ATP to form Thr-AMP and then transferred to the acceptor end of tRNA(Thr). Also edits incorrectly charged L-seryl-tRNA(Thr). The sequence is that of Threonine--tRNA ligase from Francisella tularensis subsp. tularensis (strain WY96-3418).